The following is a 326-amino-acid chain: DNA-binding death effector domain-containing protein 2 (326 aa).

One can recognise a DED domain in the interval 25-104 (SLHRMFEVVG…RHDLLPHLAR (80 aa)). The Nuclear localization signal motif lies at 104–109 (RKRRRP). Positions 104–194 (RKRRRPVSPE…PARPSSEGKV (91 aa)) are disordered. Low complexity predominate over residues 136-146 (SSSSANSQQGQ). Residues 155–173 (KRQRRSRGRPSGGARRRRR) carry the Bipartite nuclear localization signal motif. Residues 155–174 (KRQRRSRGRPSGGARRRRRG) show a composition bias toward basic residues. Residues 175-191 (APAAPQQQSEPARPSSE) are compositionally biased toward low complexity.

As to quaternary structure, interacts with CASP8, CASP10 and GTF3C3. Homodimerizes and heterodimerizes with DEDD. In terms of tissue distribution, expressed in most tissues. High levels were found in liver, kidney, heart, ovary, spleen, testes, skeletal muscle and peripheral blood leukocytes. Expression was absent or low in colon and small intestine. Expression is relatively high in the tumor cell lines chronic myologenous leukemia K-562 and the colorectal adenocarcinoma SW480. Expression is moderate in the cervical carcinoma HeLa, the Burkitt's lymphoma Raji, the lung carcinoma A-549, and the melanoma G-361. In contrast, two leukemia cell lines, HL-60 (promyelocytic leukemia) and MOLT-4 (lymphoblastic leukemia), show relatively low levels.

Its subcellular location is the nucleus. The protein localises to the nucleolus. Its function is as follows. May play a critical role in death receptor-induced apoptosis and may target CASP8 and CASP10 to the nucleus. May regulate degradation of intermediate filaments during apoptosis. May play a role in the general transcription machinery in the nucleus and might be an important regulator of the activity of GTF3C3. The polypeptide is DNA-binding death effector domain-containing protein 2 (DEDD2) (Homo sapiens (Human)).